We begin with the raw amino-acid sequence, 162 residues long: Putative 4-hydroxy-4-methyl-2-oxoglutarate aldolase (162 aa).

Substrate-binding positions include 75–78 and Arg97; that span reads GDML. Asp98 contributes to the a divalent metal cation binding site.

This sequence belongs to the class II aldolase/RraA-like family. In terms of assembly, homotrimer. It depends on a divalent metal cation as a cofactor.

The catalysed reaction is 4-hydroxy-4-methyl-2-oxoglutarate = 2 pyruvate. It catalyses the reaction oxaloacetate + H(+) = pyruvate + CO2. Its function is as follows. Catalyzes the aldol cleavage of 4-hydroxy-4-methyl-2-oxoglutarate (HMG) into 2 molecules of pyruvate. Also contains a secondary oxaloacetate (OAA) decarboxylase activity due to the common pyruvate enolate transition state formed following C-C bond cleavage in the retro-aldol and decarboxylation reactions. The polypeptide is Putative 4-hydroxy-4-methyl-2-oxoglutarate aldolase (Pseudomonas syringae pv. tomato (strain ATCC BAA-871 / DC3000)).